The chain runs to 862 residues: Molybdenum cofactor sulfurase (862 aa).

Ser34 is modified (phosphoserine). Residue Lys264 is modified to N6-(pyridoxal phosphate)lysine. Residue Cys424 is part of the active site. Residue Ser517 is modified to Phosphoserine. An MOSC domain is found at 704–855; the sequence is RKTPKKGQPP…LSVGSEVLPV (152 aa).

This sequence belongs to the class-V pyridoxal-phosphate-dependent aminotransferase family. MOCOS subfamily. It depends on pyridoxal 5'-phosphate as a cofactor.

It catalyses the reaction Mo-molybdopterin + L-cysteine + AH2 = thio-Mo-molybdopterin + L-alanine + A + H2O. It functions in the pathway cofactor biosynthesis; molybdopterin biosynthesis. In terms of biological role, sulfurates the molybdenum cofactor. Sulfation of molybdenum is essential for xanthine dehydrogenase (XDH) and aldehyde oxidase (ADO) enzymes in which molybdenum cofactor is liganded by 1 oxygen and 1 sulfur atom in active form. This chain is Molybdenum cofactor sulfurase (Mocos), found in Mus musculus (Mouse).